A 1249-amino-acid chain; its full sequence is Hyphally regulated cell wall protein 3 (1249 aa).

The first 20 residues, 1-20 (MHLFKRIALTLWLIISSTLA), serve as a signal peptide directing secretion. N-linked (GlcNAc...) asparagine glycosylation occurs at Asn-373. Over residues 383-415 (FPTTSQSSSSETVASSSQPDSSSTEPSAFPSST) the composition is skewed to low complexity. 2 disordered regions span residues 383–729 (FPTT…SGII) and 883–1217 (GLST…SSAS). Polar residues predominate over residues 416 to 428 (GDSSAEPSITSDY). Positions 429–716 (SSSELSVVPS…SEYTATWTTT (288 aa)) are enriched in low complexity. Asn-681 carries N-linked (GlcNAc...) asparagine glycosylation. Composition is skewed to polar residues over residues 717-729 (NSDG…SGII) and 883-935 (GLST…PVPT). Asn-891, Asn-940, Asn-944, Asn-948, Asn-952, Asn-956, Asn-960, Asn-966, Asn-970, Asn-974, Asn-984, Asn-988, Asn-992, Asn-996, Asn-1000, Asn-1010, Asn-1014, Asn-1018, Asn-1022, Asn-1026, Asn-1032, Asn-1046, Asn-1050, Asn-1058, Asn-1062, Asn-1072, Asn-1076, Asn-1080, Asn-1086, Asn-1090, Asn-1094, Asn-1098, Asn-1114, Asn-1118, Asn-1122, Asn-1128, Asn-1132, Asn-1136, Asn-1140, Asn-1150, Asn-1154, Asn-1158, Asn-1172, Asn-1180, and Asn-1186 each carry an N-linked (GlcNAc...) asparagine glycan. Residues 941–959 (GSNNGSDNGSNNGSNNGSN) are compositionally biased toward low complexity. Gly residues predominate over residues 960–982 (NGSGSGNGSNNGSNNGSGSGNGF). A compositionally biased stretch (low complexity) spans 983–1043 (NNGSDNGSNN…SNSGSDSGNG (61 aa)). Over residues 1062–1078 (NGSGSGGESNNGSGNGS) the composition is skewed to gly residues. A compositionally biased stretch (low complexity) spans 1079-1097 (DNGSSPDNGSNNGSNNGSN). The span at 1139 to 1167 (NNGSNSGSNSDNGSNNSSGNGSSSDLGSV) shows a compositional bias: low complexity. 2 stretches are compositionally biased toward low complexity: residues 1175 to 1194 (NEGS…GAGA) and 1205 to 1217 (SPSA…SSAS). N-linked (GlcNAc...) asparagine glycosylation is present at Asn-1225. Asn-1225 is lipidated: GPI-anchor amidated asparagine. Positions 1226-1249 (GSGKLLNGKVLTLSVLSSMVVVFL) are cleaved as a propeptide — removed in mature form.

Belongs to the HYR1/IFF family. The GPI-anchor is attached to the protein in the endoplasmic reticulum and serves to target the protein to the cell surface. There, the glucosamine-inositol phospholipid moiety is cleaved off and the GPI-modified mannoprotein is covalently attached via its lipidless GPI glycan remnant to the 1,6-beta-glucan of the outer cell wall layer.

It localises to the secreted. The protein localises to the cell wall. Its subcellular location is the membrane. Its function is as follows. GPI-anchored cell wall protein involved in cell wall organization, hyphal growth, as well as in host-fungal interaction and virulence. This Candida albicans (strain SC5314 / ATCC MYA-2876) (Yeast) protein is Hyphally regulated cell wall protein 3 (HYR3).